The primary structure comprises 261 residues: Ribonuclease HII (261 aa).

The RNase H type-2 domain occupies 71-260 (HYIAGVDEVG…LHKYRHNTLL (190 aa)). Positions 77, 78, and 169 each coordinate a divalent metal cation.

Belongs to the RNase HII family. The cofactor is Mn(2+). It depends on Mg(2+) as a cofactor.

The protein resides in the cytoplasm. The enzyme catalyses Endonucleolytic cleavage to 5'-phosphomonoester.. In terms of biological role, endonuclease that specifically degrades the RNA of RNA-DNA hybrids. This chain is Ribonuclease HII, found in Oceanobacillus iheyensis (strain DSM 14371 / CIP 107618 / JCM 11309 / KCTC 3954 / HTE831).